We begin with the raw amino-acid sequence, 504 residues long: Maturase K (504 aa).

Belongs to the intron maturase 2 family. MatK subfamily.

Its subcellular location is the plastid. The protein resides in the chloroplast. Usually encoded in the trnK tRNA gene intron. Probably assists in splicing its own and other chloroplast group II introns. The chain is Maturase K from Lupinus argenteus (Silvery lupine).